The sequence spans 285 residues: NAD kinase (285 aa).

Asp-66 serves as the catalytic Proton acceptor. Residues 66–67 (DG), 137–138 (ND), Arg-148, Arg-165, Asp-167, and 178–183 (TAYSMS) each bind NAD(+).

It belongs to the NAD kinase family. The cofactor is a divalent metal cation.

The protein localises to the cytoplasm. It carries out the reaction NAD(+) + ATP = ADP + NADP(+) + H(+). Functionally, involved in the regulation of the intracellular balance of NAD and NADP, and is a key enzyme in the biosynthesis of NADP. Catalyzes specifically the phosphorylation on 2'-hydroxyl of the adenosine moiety of NAD to yield NADP. This is NAD kinase from Chlorobium luteolum (strain DSM 273 / BCRC 81028 / 2530) (Pelodictyon luteolum).